The chain runs to 201 residues: 3-isopropylmalate dehydratase small subunit (201 aa).

Belongs to the LeuD family. LeuD type 1 subfamily. In terms of assembly, heterodimer of LeuC and LeuD.

The enzyme catalyses (2R,3S)-3-isopropylmalate = (2S)-2-isopropylmalate. It participates in amino-acid biosynthesis; L-leucine biosynthesis; L-leucine from 3-methyl-2-oxobutanoate: step 2/4. In terms of biological role, catalyzes the isomerization between 2-isopropylmalate and 3-isopropylmalate, via the formation of 2-isopropylmaleate. In Rhodopseudomonas palustris (strain HaA2), this protein is 3-isopropylmalate dehydratase small subunit.